Here is a 171-residue protein sequence, read N- to C-terminus: Protein-export protein SecB (171 aa).

The protein belongs to the SecB family. Homotetramer, a dimer of dimers. One homotetramer interacts with 1 SecA dimer.

It is found in the cytoplasm. One of the proteins required for the normal export of preproteins out of the cell cytoplasm. It is a molecular chaperone that binds to a subset of precursor proteins, maintaining them in a translocation-competent state. It also specifically binds to its receptor SecA. The protein is Protein-export protein SecB of Histophilus somni (strain 129Pt) (Haemophilus somnus).